A 2115-amino-acid chain; its full sequence is Non-reducing polyketide synthase PFUR17_0229 (2115 aa).

The tract at residues 8-246 is N-terminal acylcarrier protein transacylase (SAT) domain (SAT); the sequence is VLFGDQTVDP…ISLPITAAFH (239 aa). Positions 367–796 constitute a Ketosynthase family 3 (KS3) domain; it reads SGDIAIVGVA…GGNTSLVLED (430 aa). Catalysis depends on for beta-ketoacyl synthase activity residues Cys539, His674, and His713. The interval 895-1218 is malonyl-CoA:ACP transacylase (MAT) domain; that stretch reads IFAFTGQGAQ…SISNAYNSGA (324 aa). The product template (PT) domain stretch occupies residues 1279–1592; that stretch reads TTCLQKVESE…KRNILQSLLS (314 aa). Residues 1282 to 1413 are N-terminal hotdog fold; that stretch reads LQKVESETFT…CTVMYGDGQQ (132 aa). A PKS/mFAS DH domain is found at 1282-1588; that stretch reads LQKVESETFT…FQKMKRNILQ (307 aa). His1315 (proton acceptor; for dehydratase activity) is an active-site residue. Residues 1441 to 1588 are C-terminal hotdog fold; it reads VHRLLKEMIY…FQKMKRNILQ (148 aa). The active-site Proton donor; for dehydratase activity is the Asp1501. The interval 1594–1613 is disordered; it reads GHEETPPARPVPSKRTVQGS. Residues 1626-1703 enclose the Carrier 1 domain; that stretch reads KAASGGFSNI…QLRNFFLDKV (78 aa). Ser1663 carries the O-(pantetheine 4'-phosphoryl)serine modification. The segment at 1710-1742 is disordered; it reads FDDEESEMSSSTAGSTPGSSTSHGNQNTTVTTP. Low complexity predominate over residues 1718–1733; sequence SSSTAGSTPGSSTSHG. The region spanning 1742–1819 is the Carrier 2 domain; that stretch reads PAEPDVVAIL…DVQKALGVPS (78 aa). O-(pantetheine 4'-phosphoryl)serine is present on Ser1779. A thioesterase (TE) domain region spans residues 1861–2097; the sequence is LFLLPDGAGS…VVGGNHFSIM (237 aa).

It depends on pantetheine 4'-phosphate as a cofactor.

It carries out the reaction 6 malonyl-CoA + 2 acetyl-CoA + 5 H(+) = o-orsellinate depside + 6 CO2 + 8 CoA + H2O. Functionally, non-reducing polyketide synthase; part of a gene cluster that mediates the biosynthesis of a yet unidentified depside/depsidone compound. The first step in the pathway is performed by the PKS PFUR17_0229 that condenses 2 acetyl-CoA starter units with 6 malonyl-CoA units to produce lecanoric acid (LA), also known as orsellinate depside. The biosynthesis occurs via the formation of 2 orsellinate intermediates fused together by the C-terminal thioesterase (TE) domain that finally releases lecanoric acid. In addition to the PKS gene, the PFUR17 gene cluster contains closely linked genes encoding a cytochrome P-450 and a laccase (phenol oxidase), directly upstream and downstream respectively, so it is likely that lecanoric acid is an intermediate in a longer biosynthetic pathway. In Pseudevernia furfuracea (Tree moss), this protein is Non-reducing polyketide synthase PFUR17_0229.